The following is a 170-amino-acid chain: Crossover junction endodeoxyribonuclease RuvC (170 aa).

Catalysis depends on residues aspartate 9, glutamate 70, and aspartate 145. Positions 9, 70, and 145 each coordinate Mg(2+).

Belongs to the RuvC family. Homodimer which binds Holliday junction (HJ) DNA. The HJ becomes 2-fold symmetrical on binding to RuvC with unstacked arms; it has a different conformation from HJ DNA in complex with RuvA. In the full resolvosome a probable DNA-RuvA(4)-RuvB(12)-RuvC(2) complex forms which resolves the HJ. Mg(2+) serves as cofactor.

It localises to the cytoplasm. It catalyses the reaction Endonucleolytic cleavage at a junction such as a reciprocal single-stranded crossover between two homologous DNA duplexes (Holliday junction).. Its function is as follows. The RuvA-RuvB-RuvC complex processes Holliday junction (HJ) DNA during genetic recombination and DNA repair. Endonuclease that resolves HJ intermediates. Cleaves cruciform DNA by making single-stranded nicks across the HJ at symmetrical positions within the homologous arms, yielding a 5'-phosphate and a 3'-hydroxyl group; requires a central core of homology in the junction. The consensus cleavage sequence is 5'-(A/T)TT(C/G)-3'. Cleavage occurs on the 3'-side of the TT dinucleotide at the point of strand exchange. HJ branch migration catalyzed by RuvA-RuvB allows RuvC to scan DNA until it finds its consensus sequence, where it cleaves and resolves the cruciform DNA. The protein is Crossover junction endodeoxyribonuclease RuvC of Chlamydia muridarum (strain MoPn / Nigg).